Reading from the N-terminus, the 384-residue chain is MKPHFRNPVERMYQDTFSDNFYNRPILSHRNTVWLCYEVKTKGPSRPPLDAKIFRGQVYSKLKYHPEMRFFHWFSKWRKLHRDQEYEVTWYISWSPCTKCTRDVATFLAEDPKVTLTIFVARLYYFWDPDYQEALRSLCQKRDGPRATMKIMNYDEFQHCWSKFVYSQRELFEPWNNLPKYYILLHIMLGEILRHSMDPPTFTSNFNNELWVRGRHETYLCYEVERLHNDTWVLLNQRRGFLCNQAPHKHGFLEGRHAELCFLDVIPFWKLDLHQDYRVTCFTSWSPCFSCAQEMAKFISNNKHVSLCIFAARIYDDQGRCQEGLRTLAKAGAKISIMTYSEFKHCWDTFVDHQGCPFQPWDGLEEHSQALSGRLRAILQNQGN.

The essential for cytoplasmic localization stretch occupies residues 1–60; it reads MKPHFRNPVERMYQDTFSDNFYNRPILSHRNTVWLCYEVKTKGPSRPPLDAKIFRGQVYS. CMP/dCMP-type deaminase domains are found at residues 29–138 and 214–328; these read HRNT…LRSL and GRHE…LRTL. A Phosphothreonine; by PKA modification is found at T32. Positions 65, 97, and 100 each coordinate Zn(2+). The segment at 209 to 336 is necessary for homooligomerization; the sequence is ELWVRGRHET…TLAKAGAKIS (128 aa). Residues 213-215 are interaction with DNA; sequence RGR. Position 218 is a phosphothreonine; by PKA and CAMK2 (T218). H257 is a Zn(2+) binding site. Residue E259 is the Proton donor of the active site. Residues C288 and C291 each coordinate Zn(2+). The interaction with DNA stretch occupies residues 313–320; it reads RIYDDQGR.

This sequence belongs to the cytidine and deoxycytidylate deaminase family. Homodimer. Homooligomer. Can bind RNA to form ribonucleoprotein complexes of high-molecular-mass (HMM) or low-molecular-mass (LMM). HMM is inactive and heterogeneous in protein composition because of binding nonselectively to cellular RNAs, which in turn are associated with variety of cellular proteins. The LMM form which is enzymatically active has few or no RNAs associated. Its ability to form homooligomer is distinct from its ability to assemble into HMM. Interacts with APOBEC3B, APOBEC3F, MOV10, AGO2, EIF4E, EIF4ENIF1, DCP2 and DDX6 in an RNA-dependent manner. Interacts with AGO1, AGO3 and PKA/PRKACA. Requires Zn(2+) as cofactor.

The protein localises to the cytoplasm. The protein resides in the nucleus. It localises to the P-body. It carries out the reaction a 2'-deoxycytidine in single-stranded DNA + H2O + H(+) = a 2'-deoxyuridine in single-stranded DNA + NH4(+). Functionally, DNA deaminase (cytidine deaminase) which acts as an inhibitor of retrovirus replication and retrotransposon mobility via deaminase-dependent and -independent mechanisms. Exhibits antiviral activity against vif-deficient: HIV-1 and simian immunodeficiency viruses (SIVs) and also against simian foamy virus (SFV). After the penetration of retroviral nucleocapsids into target cells of infection and the initiation of reverse transcription, it can induce the conversion of cytosine to uracil in the minus-sense single-strand viral DNA, leading to G-to-A hypermutations in the subsequent plus-strand viral DNA. The resultant detrimental levels of mutations in the proviral genome, along with a deamination-independent mechanism that works prior to the proviral integration, together exert efficient antiretroviral effects in infected target cells. Selectively targets single-stranded DNA and does not deaminate double-stranded DNA or single- or double-stranded RNA. May inhibit the mobility of LTR retrotransposons. The sequence is that of DNA dC-&gt;dU-editing enzyme APOBEC-3G (APOBEC3G) from Pan troglodytes (Chimpanzee).